The sequence spans 110 residues: Glycine cleavage system H-like protein (110 aa).

The Lipoyl-binding domain occupies 10–97; the sequence is VEKVGDLYVF…PEENWLFKLD (88 aa). D27 carries the ADP-ribosyl aspartic acid modification. N6-lipoyllysine is present on K56.

As to quaternary structure, lipoylated GcvH-L directly interacts with SAV0325, which reverses the SirTM-mediated mono-ADP-ribosylation of GcvH-L, and with the oxidoreductase SAV0322. In terms of processing, is lipoylated on K-56 by LplA2 (SAV0327) and then mono-ADP-ribosylated, probably on D-27, by SirTM (SAV0326). The mono-ADP-ribosylation state of GcvH-L might regulate the availability of the lipoyl moiety for redox reactions; ADP-ribosylation would inhibit the interaction of the oxidoreductase with GcvH-L when it is not required, thus ADP-ribosylation of GcvH-L might be acting to keep the response 'off' under non-stress conditions.

Functionally, may act as a carrier protein for the ROS scavenging lipoyl moiety and/or as a substrate for oxidoreductases such as SAV0322 and SAV0323. The sequence is that of Glycine cleavage system H-like protein from Staphylococcus aureus (strain Mu50 / ATCC 700699).